The following is a 541-amino-acid chain: Glucose-6-phosphate isomerase (541 aa).

E346 (proton donor) is an active-site residue. Active-site residues include H377 and K506.

This sequence belongs to the GPI family.

The protein resides in the cytoplasm. The catalysed reaction is alpha-D-glucose 6-phosphate = beta-D-fructose 6-phosphate. It participates in carbohydrate biosynthesis; gluconeogenesis. The protein operates within carbohydrate degradation; glycolysis; D-glyceraldehyde 3-phosphate and glycerone phosphate from D-glucose: step 2/4. In terms of biological role, catalyzes the reversible isomerization of glucose-6-phosphate to fructose-6-phosphate. The sequence is that of Glucose-6-phosphate isomerase from Rhizobium etli (strain CIAT 652).